Reading from the N-terminus, the 701-residue chain is T-cell immunomodulatory protein homolog (701 aa).

Residues 1–29 form the signal peptide; the sequence is MVKCGKYVLILELLLLTLLYNLIKRVSNS. Over 30–657 the chain is Extracellular; it reads GETVSSFVDG…IQLSVNPSNK (628 aa). Asn148, Asn180, Asn217, Asn258, Asn458, Asn522, and Asn571 each carry an N-linked (GlcNAc...) asparagine glycan. A helical membrane pass occupies residues 658–678; the sequence is FYSIIYITLICLSVIGVLIFI. Over 679–701 the chain is Cytoplasmic; the sequence is LDRKEKIEDSKEEMGFKSHFVIG.

It belongs to the TIP family.

The protein localises to the membrane. Its function is as follows. May protect the parasite against attack by the host immune system by immunomodulation. The chain is T-cell immunomodulatory protein homolog from Plasmodium yoelii yoelii.